Reading from the N-terminus, the 428-residue chain is C4-dicarboxylate transport protein (428 aa).

Transmembrane regions (helical) follow at residues 8 to 28 (SLYF…HFYP), 44 to 64 (LIKM…IAGM), 76 to 96 (VALL…LIIV), 142 to 162 (IGAF…LFGF), 184 to 204 (VIFG…FGAM), 222 to 242 (LIIC…GSIA), 326 to 346 (IFHQ…AAGV), and 352 to 372 (IVLA…LALI).

The protein belongs to the dicarboxylate/amino acid:cation symporter (DAACS) (TC 2.A.23) family.

It localises to the cell inner membrane. Its function is as follows. Responsible for the transport of dicarboxylates such as succinate, fumarate, and malate from the periplasm across the membrane. This Enterobacter sp. (strain 638) protein is C4-dicarboxylate transport protein.